Here is an 832-residue protein sequence, read N- to C-terminus: Protein wech (832 aa).

A compositionally biased stretch (polar residues) spans 1 to 14 (MMELLSNNSVPQQM). The disordered stretch occupies residues 1 to 42 (MMELLSNNSVPQQMASSNAPSANNVAHSSTANGSGGGSVSSN). Residues 15 to 32 (ASSNAPSANNVAHSSTAN) are compositionally biased toward low complexity. The residue at position 107 (S107) is a Phosphoserine. 2 B box-type zinc fingers span residues 118-163 (NSSI…IVSL) and 184-224 (SGNF…YASI). Zn(2+) contacts are provided by C123, C126, C145, H149, C189, H192, C211, and H216. Residues S470, S475, and S506 each carry the phosphoserine modification. NHL repeat units lie at residues 537–580 (SLSF…FNPD), 584–627 (KFKF…FTAS), 631–674 (LLKF…FDSE), 680–722 (QIVF…IDPD), and 727–770 (LSVK…FNQN).

In terms of assembly, interacts with the head domain of rhea and the kinase domain of Ilk. Interacts with AGO1. Interacts with mei-P26. In terms of tissue distribution, expressed in ovarian germline stem cells (at protein level). Expressed ubiquitously in all epithelial cells during early stages of embryogenesis. Specifically expressed at epidermal muscle attachment site.

Its function is as follows. Vital for larval development. Plays a role in tumor formation. A crucial component for the physical link between integrins and the cytoskeleton in the epidermal muscle attachment sites. The chain is Protein wech (wech) from Drosophila melanogaster (Fruit fly).